The chain runs to 63 residues: U2-agatoxin-Ao1v (63 aa).

The first 14 residues, 1–14 (LLLISAMVGSMIAA), serve as a signal peptide directing secretion. Positions 15–28 (VPEEESLQLSEDER) are excised as a propeptide. Cystine bridges form between C31/C47, C38/C52, and C46/C62.

Belongs to the neurotoxin 01 (U2-agtx) family. As to expression, expressed by the venom gland.

It is found in the secreted. Its function is as follows. Insect active toxin causing rapid but reversible paralysis in crickets. No activity shown in mammals. Does not show effect on mammalian voltage-gated calcium channels. This chain is U2-agatoxin-Ao1v, found in Agelena orientalis (Funnel-web spider).